Consider the following 163-residue polypeptide: MSKESSFDIVSKVDLSEVANAINIAMKEIKTRYDFKGSKSDISLEKDELVLISDDEFKLEQLKDVLIGKLIKRGVATKNIQYGKIEPAAGGTVRQRAKLVQGIDKENAKKITTIIKNTGLKVKSQVQDDQIRVSGKSKDDLQKVIAAIREADLPIEVQFVNYR.

The protein belongs to the YajQ family.

In terms of biological role, nucleotide-binding protein. This is Nucleotide-binding protein GK0742 from Geobacillus kaustophilus (strain HTA426).